The primary structure comprises 291 residues: Probable cell wall amidase LytH (291 aa).

Positions 1–40 are cleaved as a signal peptide; the sequence is MKKIDSWLTKHGLKNRLTLVVIVIFIIFLILLFMFVNLSD. Residues 41 to 105 enclose the SH3b domain; it reads EDTGQITITE…WVAGWHTNLN (65 aa). Residues 122-286 enclose the MurNAc-LAA domain; it reads IVLDPGHGGS…VEQAIVDGLK (165 aa). The tract at residues 123 to 147 is disordered; sequence VLDPGHGGSDQGASSSTPSKSLEKN. Residues 133 to 142 are compositionally biased toward polar residues; that stretch reads QGASSSTPSK.

It belongs to the N-acetylmuramoyl-L-alanine amidase 3 family.

It is found in the secreted. Functionally, probably involved in cell-wall metabolism. This Staphylococcus epidermidis (strain ATCC 35984 / DSM 28319 / BCRC 17069 / CCUG 31568 / BM 3577 / RP62A) protein is Probable cell wall amidase LytH (lytH).